A 576-amino-acid polypeptide reads, in one-letter code: Vesicular glutamate transporter 1 (576 aa).

Residues 1–63 (MEFRKEEFKK…CTCFGLPRRY (63 aa)) are Cytoplasmic-facing. The helical transmembrane segment at 64–84 (IIAIMSGLGFCISFGIRCNLG) threads the bilayer. The Vesicular portion of the chain corresponds to 85–116 (VAIVSMVNNNTVYKGNKLVIEQAQFNWDPETV). Residue Asn93 is glycosylated (N-linked (GlcNAc...) asparagine). The chain crosses the membrane as a helical span at residues 117-137 (GMIHGSFFWGYIVTQIPGGYI). The Cytoplasmic segment spans residues 138 to 140 (CQK). The helical transmembrane segment at 141 to 161 (FAANRVFGFAIVATSTLNMLI) threads the bilayer. Residues 162–168 (PSAARVH) are Vesicular-facing. Residues 169 to 189 (FACVICVRILQGLVEGVTYPA) form a helical membrane-spanning segment. Residues 190–208 (CHGIWSKWAPPLERSRLAT) are Cytoplasmic-facing. A helical membrane pass occupies residues 209 to 229 (TAFCGSYAGAVVAMPLAGVLV). At 230 to 236 (QYSGWSS) the chain is on the vesicular side. The helical transmembrane segment at 237–257 (VFYVYGSFGITWYMFWILVSY) threads the bilayer. Residues 258–297 (ESPAQHPTISEEERKYIEESIGESTGFMNPMAKFKAPWRK) are Cytoplasmic-facing. A helical transmembrane segment spans residues 298 to 320 (FFTSMPVYAIIVANFCRSWTFYL). At 321–341 (LLISQPAYFEEVFGFAISKVG) the chain is on the vesicular side. The helical transmembrane segment at 342 to 362 (LLSALPHLVMTIIVPIGGQIA) threads the bilayer. The Cytoplasmic segment spans residues 363 to 378 (DFLRTKRIMSTTNVRK). The helical transmembrane segment at 379–399 (MMNCGGFGMEATLLLVVGYSH) threads the bilayer. Topologically, residues 400–401 (SR) are vesicular. A helical transmembrane segment spans residues 402 to 422 (GVAISFLVLAVGFSGFAISGF). At 423-435 (NVNHLDIAPRYAS) the chain is on the cytoplasmic side. The chain crosses the membrane as a helical span at residues 436 to 456 (ILMGISNGVGTLSGMVCPLIV). Residues 457 to 469 (GAMTKHKTREEWQ) are Vesicular-facing. A helical membrane pass occupies residues 470–490 (YVFLIASLVHYGGVVFYGIFA). At 491 to 576 (SGEKQPWAEP…YGTVAERDLS (86 aa)) the chain is on the cytoplasmic side. Positions 517–552 (ADESEEQTQAHGGYGSYGATQTTSQQNGGWATDWEK) are disordered. Residues 534–545 (GATQTTSQQNGG) show a composition bias toward polar residues.

It belongs to the major facilitator superfamily. Sodium/anion cotransporter family. VGLUT subfamily.

The protein localises to the cytoplasmic vesicle. It localises to the secretory vesicle. It is found in the synaptic vesicle membrane. Its subcellular location is the cell membrane. The protein resides in the synapse. The protein localises to the synaptosome. It carries out the reaction L-glutamate(out) = L-glutamate(in). The enzyme catalyses chloride(in) = chloride(out). The catalysed reaction is 3 Na(+)(out) + phosphate(out) = 3 Na(+)(in) + phosphate(in). It catalyses the reaction phosphate(in) = phosphate(out). It carries out the reaction K(+)(in) + H(+)(out) = K(+)(out) + H(+)(in). With respect to regulation, chloride channel activity is allosterically activated by lumenal H(+) and Cl(-) leading to synaptic vesicles acidification. The L-glutamate transport activity is allosterically activated by lumenal H(+) and Cl(-). The allosteric activation by H(+) efficiently prevents non-vesicular efflux across the plasma membrane, thereby restricting L-glutamate transport activity to acidic membranes such as synaptic vesicles. Multifunctional transporter that transports L-glutamate as well as multiple ions such as chloride, proton, potassium, sodium and phosphate. At the synaptic vesicle membrane, mainly functions as an uniporter which transports preferentially L-glutamate but also phosphate from the cytoplasm into synaptic vesicles at presynaptic nerve terminals of excitatory neural cells. The L-glutamate or phosphate uniporter activity is electrogenic and is driven by the proton electrochemical gradient, mainly by the electrical gradient established by the vacuolar H(+)-ATPase across the synaptic vesicle membrane. In addition, functions as a chloride channel that allows a chloride permeation through the synaptic vesicle membrane that affects the proton electrochemical gradient and promotes synaptic vesicles acidification. Moreover, may function as a K(+)/H(+) antiport allowing to maintain the electrical gradient and to decrease chemical gradient and therefore sustain vesicular glutamate uptake. The vesicular K(+)/H(+) antiport activity is electroneutral. At the plasma membrane, following exocytosis, functions as a symporter of Na(+) and phosphate from the extracellular space to the cytoplasm allowing synaptic phosphate homeostasis regulation. The symporter activity is driven by an inside negative membrane potential and is electrogenic. Is necessary for synaptic signaling of visual-evoked responses from photoreceptors. The polypeptide is Vesicular glutamate transporter 1 (Xenopus laevis (African clawed frog)).